A 215-amino-acid chain; its full sequence is Pyridoxine/pyridoxamine 5'-phosphate oxidase (215 aa).

Substrate is bound by residues 9-12 (RRDY) and lysine 69. FMN is bound by residues 64–69 (RVLLLK), 79–80 (FS), lysine 86, and glutamine 108. Residues tyrosine 126, arginine 130, and serine 134 each coordinate substrate. Residues 143–144 (QS) and tryptophan 188 contribute to the FMN site. Position 194-196 (194-196 (RLH)) interacts with substrate. Residue arginine 198 participates in FMN binding.

Belongs to the pyridoxamine 5'-phosphate oxidase family. As to quaternary structure, homodimer. Requires FMN as cofactor.

The enzyme catalyses pyridoxamine 5'-phosphate + O2 + H2O = pyridoxal 5'-phosphate + H2O2 + NH4(+). The catalysed reaction is pyridoxine 5'-phosphate + O2 = pyridoxal 5'-phosphate + H2O2. The protein operates within cofactor metabolism; pyridoxal 5'-phosphate salvage; pyridoxal 5'-phosphate from pyridoxamine 5'-phosphate: step 1/1. It functions in the pathway cofactor metabolism; pyridoxal 5'-phosphate salvage; pyridoxal 5'-phosphate from pyridoxine 5'-phosphate: step 1/1. In terms of biological role, catalyzes the oxidation of either pyridoxine 5'-phosphate (PNP) or pyridoxamine 5'-phosphate (PMP) into pyridoxal 5'-phosphate (PLP). This is Pyridoxine/pyridoxamine 5'-phosphate oxidase from Azotobacter vinelandii (strain DJ / ATCC BAA-1303).